The chain runs to 218 residues: uncharacterized protein (218 aa).

Zn(2+)-binding residues include histidine 57, histidine 59, aspartate 61, histidine 62, histidine 138, aspartate 158, and histidine 199.

Belongs to the metallo-beta-lactamase superfamily. Glyoxalase II family. The cofactor is Zn(2+).

This is an uncharacterized protein from Mycobacterium leprae (strain TN).